The following is a 603-amino-acid chain: MAEETGQSKLAAAKKKFKEYWQRNRPGVPAAAKRNTKANGSSPETAASGGCHSSEASSSASSSLHARQSPCQEQAAVLNSRSIKISRLNDTIKSLKQQKKQVEHQLEEEKKANNEKQKAERELEGQIQRLNTEKKKLNTDLYHMKHSLRYFEEESKDLAGRLQRSSQRIGELEWSLCAVAATQKKKPDGFSSRSKALLKRQLEQSIREQILLKGHVTQLKESLKEVQLERDQYAEQIKGERAQWQQRMRKMSQEVCTLKEEKKHDTHRVEELERSLSRLKNQMAEPLPPDAPAVSSEVELQDLRKELERVAGELQAQVENNQCISLLNRGQKERLREQEERLQEQQERLREREKRLQQLAEPQSDLEELKHENKSALQLEQQVKELQEKLGQVMETLTSAEKEPEAAVPASGTGGESSGLMDLLEEKADLREHVEKLELGFIQYRRERCHQKVHRLLTEPGDSAKDASPGGGHHQAGPGQGGEEGEAAGAAGDGVAACGSYSEGHGKFLAAARNPAAEPSPGAPAPQELGAADKHGDLCEASLTNSVEPAQGEAREGSSQDNPTAQPVLQLLGEMQDHQEHPGLGSNCCVPCFCWAWLPRRRR.

Disordered stretches follow at residues 1-82 (MAEE…NSRS), 95-125 (LKQQ…ELEG), 398-419 (TSAE…ESSG), and 460-492 (PGDS…GAAG). The span at 46 to 66 (AASGGCHSSEASSSASSSLHA) shows a compositional bias: low complexity. A compositionally biased stretch (polar residues) spans 69–82 (SPCQEQAAVLNSRS). Coiled coils occupy residues 82–173 (SIKI…GELE) and 212–440 (LKGH…LELG). The segment covering 100-124 (KQVEHQLEEEKKANNEKQKAERELE) has biased composition (basic and acidic residues). Residues 469-482 (PGGGHHQAGPGQGG) show a composition bias toward gly residues. Residues 491–603 (AGDGVAACGS…CWAWLPRRRR (113 aa)) are golgi-targeting domain.

The protein belongs to the GOLGA8 family. Highly expressed in brain, heart and kidney. Detected at lower levels in liver, thymus, spleen, lung and peripheral blood leukocytes.

The protein localises to the golgi apparatus. It is found in the golgi stack membrane. In terms of biological role, may be involved in maintaining Golgi structure. The protein is Golgin subfamily A member 8B (GOLGA8B) of Homo sapiens (Human).